Consider the following 556-residue polypeptide: Polypeptide N-acetylgalactosaminyltransferase 13 (556 aa).

At 1–4 the chain is on the cytoplasmic side; the sequence is MRRL. A helical; Signal-anchor for type II membrane protein transmembrane segment spans residues 5 to 27; that stretch reads VYCKVVLATSLMWVLVDVFLLLY. The Lumenal segment spans residues 28–556; the sequence is FSECNKCDDK…WLLRNMTLGT (529 aa). 2 N-linked (GlcNAc...) asparagine glycosylation sites follow: asparagine 94 and asparagine 116. 5 cysteine pairs are disulfide-bonded: cysteine 105–cysteine 338, cysteine 329–cysteine 407, cysteine 441–cysteine 458, cysteine 481–cysteine 496, and cysteine 522–cysteine 539. Residues 114–224 are catalytic subdomain A; it reads LPNTSVVIVF…LGWLEPLLAR (111 aa). Substrate contacts are provided by aspartate 155 and arginine 185. Residues aspartate 208 and histidine 210 each coordinate Mn(2+). The segment at 284 to 346 is catalytic subdomain B; sequence PVRTPTMAGG…TCSHVGHVFR (63 aa). Tryptophan 315 contacts substrate. Histidine 343 contributes to the Mn(2+) binding site. Substrate-binding residues include arginine 346 and tyrosine 351. The Ricin B-type lectin domain occupies 428–550; it reads YSLGEIRNVE…GSRSQQWLLR (123 aa). Asparagine 551 carries N-linked (GlcNAc...) asparagine glycosylation.

The protein belongs to the glycosyltransferase 2 family. GalNAc-T subfamily. The cofactor is Mn(2+).

The protein localises to the golgi apparatus membrane. It carries out the reaction L-seryl-[protein] + UDP-N-acetyl-alpha-D-galactosamine = a 3-O-[N-acetyl-alpha-D-galactosaminyl]-L-seryl-[protein] + UDP + H(+). The enzyme catalyses L-threonyl-[protein] + UDP-N-acetyl-alpha-D-galactosamine = a 3-O-[N-acetyl-alpha-D-galactosaminyl]-L-threonyl-[protein] + UDP + H(+). The protein operates within protein modification; protein glycosylation. In terms of biological role, catalyzes the initial reaction in O-linked oligosaccharide biosynthesis, the transfer of an N-acetyl-D-galactosamine (GalNAc) residue from UDP-GalNAc to a serine or threonine residue on the protein receptor. Generates GalNAc-O-Ser/Thr structure also known as Tn antigen, which itself is immunogenic but also serves as a precursor for the synthesis of different mucin-type O-glycan core structures. Contributes to the synthesis of O-linked glycans on mucins and proteoglycans of the central nervous system. Can glycosylate both unmodified peptides and glycopeptides that already contain an O-linked GalNAc sugar. Transfers GalNAc to Thr-/Ser-rich tandem repeats GTTPSPVPTTSTTSAP of MUC5AC. Transfers GalNAc to three consecutive serine/threonine residues on SDC3 forming a triplet-Tn epitope expressed in Purkinje cells of the developing brain. May promote neurogenesis through glycosylation and stabilization of PDPN. This is Polypeptide N-acetylgalactosaminyltransferase 13 (Galnt13) from Rattus norvegicus (Rat).